Consider the following 370-residue polypeptide: MSNQDTRVVVGMSGGVDSSVTAYLLKEQGYDVIGIFMKNWDDTDENGVCTATEDYNDVIAVCNQIGIPYYAVNFEQEYWDKVFTYFLDEYKKGRTPNPDVMCNKEIKFKAFLDHAMKLGADYVATGHYAQVRRDADGNVEMLRGVDNNKDQTYFLNQLTHEQLSKVMFPLGGMEKSEVRRIAAEQDLATAKKKDSTGICFIGERNFKEFLSNYLPAQSGDMRTLNGKKMGTHSGLMYYTIGQRHGLGIGGDGDPWFVVGKNLEDNVLYVEQGFHHDALYSDYLIASDVSLVNDIDLTDGLECTAKFRYRQKDTKVTVTRIDENQIRVDFDQPVRAITPGQAVVLYDGDVCLGGATIDDVYKEAGQLTYIV.

Residues 11–18 (GMSGGVDS) and methionine 37 each bind ATP. The interaction with target base in tRNA stretch occupies residues 97–99 (NPD). The active-site Nucleophile is the cysteine 102. An intrachain disulfide couples cysteine 102 to cysteine 199. Glycine 126 provides a ligand contact to ATP. The segment at 149 to 151 (KDQ) is interaction with tRNA. The active-site Cysteine persulfide intermediate is cysteine 199. The interaction with tRNA stretch occupies residues 307–308 (RY).

It belongs to the MnmA/TRMU family.

It localises to the cytoplasm. The catalysed reaction is S-sulfanyl-L-cysteinyl-[protein] + uridine(34) in tRNA + AH2 + ATP = 2-thiouridine(34) in tRNA + L-cysteinyl-[protein] + A + AMP + diphosphate + H(+). Its function is as follows. Catalyzes the 2-thiolation of uridine at the wobble position (U34) of tRNA, leading to the formation of s(2)U34. The polypeptide is tRNA-specific 2-thiouridylase MnmA (Staphylococcus carnosus (strain TM300)).